The chain runs to 464 residues: Methionine aminopeptidase 2-2 (464 aa).

The tract at residues 1 to 106 is disordered; it reads MGAKTYEGGD…PRVPLSQLFP (106 aa). Acidic residues predominate over residues 37-53; the sequence is EDGDGEFGSDDDDDGGD. Over residues 70-86 the composition is skewed to basic residues; it reads PKKKKRSKKKKNNKKKS. His216 lines the substrate pocket. Residues Asp237, Asp248, and His317 each coordinate a divalent metal cation. Residue His325 participates in substrate binding. Residues Glu350 and Glu445 each contribute to the a divalent metal cation site.

It belongs to the peptidase M24A family. Methionine aminopeptidase eukaryotic type 2 subfamily. The cofactor is Co(2+). Zn(2+) serves as cofactor. Requires Mn(2+) as cofactor. It depends on Fe(2+) as a cofactor.

The protein localises to the cytoplasm. It catalyses the reaction Release of N-terminal amino acids, preferentially methionine, from peptides and arylamides.. Cotranslationally removes the N-terminal methionine from nascent proteins. The N-terminal methionine is often cleaved when the second residue in the primary sequence is small and uncharged (Met-Ala-, Cys, Gly, Pro, Ser, Thr, or Val). The sequence is that of Methionine aminopeptidase 2-2 from Talaromyces stipitatus (strain ATCC 10500 / CBS 375.48 / QM 6759 / NRRL 1006) (Penicillium stipitatum).